The following is a 124-amino-acid chain: Small ribosomal subunit protein uS12 (124 aa).

Asp89 carries the post-translational modification 3-methylthioaspartic acid. The interval 104 to 124 is disordered; that stretch reads ATGVKDRKQGRSKYGAKRPKE. The span at 113 to 124 shows a compositional bias: basic residues; sequence GRSKYGAKRPKE.

This sequence belongs to the universal ribosomal protein uS12 family. Part of the 30S ribosomal subunit. Contacts proteins S8 and S17. May interact with IF1 in the 30S initiation complex.

Functionally, with S4 and S5 plays an important role in translational accuracy. Interacts with and stabilizes bases of the 16S rRNA that are involved in tRNA selection in the A site and with the mRNA backbone. Located at the interface of the 30S and 50S subunits, it traverses the body of the 30S subunit contacting proteins on the other side and probably holding the rRNA structure together. The combined cluster of proteins S8, S12 and S17 appears to hold together the shoulder and platform of the 30S subunit. In Picosynechococcus sp. (strain ATCC 27264 / PCC 7002 / PR-6) (Agmenellum quadruplicatum), this protein is Small ribosomal subunit protein uS12.